Reading from the N-terminus, the 488-residue chain is Cysteine desulfurase, mitochondrial (488 aa).

Residues 25 to 52 (LPKPLATSSSPATNAPNKTSNPKTGELH) form a disordered region. The segment covering 30–47 (ATSSSPATNAPNKTSNPK) has biased composition (polar residues). Pyridoxal 5'-phosphate is bound by residues 157 to 158 (AT), N237, Q265, and 285 to 287 (SSH). K288 carries the N6-(pyridoxal phosphate)lysine modification. Residue T325 participates in pyridoxal 5'-phosphate binding. C412 functions as the Cysteine persulfide intermediate in the catalytic mechanism. A [2Fe-2S] cluster-binding site is contributed by C412.

Belongs to the class-V pyridoxal-phosphate-dependent aminotransferase family. NifS/IscS subfamily. Requires pyridoxal 5'-phosphate as cofactor.

Its subcellular location is the mitochondrion. It carries out the reaction (sulfur carrier)-H + L-cysteine = (sulfur carrier)-SH + L-alanine. Catalyzes the removal of elemental sulfur from cysteine to produce alanine. It supplies the inorganic sulfur for iron-sulfur (Fe-S) clusters. Plays a role in both tRNA-processing and mitochondrial metabolism. Involved in the 2-thio-modification of both 5-carboxymethylaminomethyl-2-thiouridine in mitochondrial tRNAs and 5-methoxycarbonylmethyl-2-thiouridine (mcm5s2U) in cytoplasmic tRNAs. The polypeptide is Cysteine desulfurase, mitochondrial (NFS1) (Candida albicans (strain SC5314 / ATCC MYA-2876) (Yeast)).